Reading from the N-terminus, the 1304-residue chain is Zinc finger CCCH domain-containing protein 4 (1304 aa).

Positions 1-33 (MEAVPGTPPPPPSESPPPPSPPPPSTPSPPPCS) are enriched in pro residues. Residues 1-387 (MEAVPGTPPP…SDHDKPHQQS (387 aa)) are disordered. Over residues 53-73 (DREDGELEEGELEDDGAEEVQ) the composition is skewed to acidic residues. The segment covering 80 to 99 (ERSRKEKGEKHHSDSEEEKS) has biased composition (basic and acidic residues). Ser-92 and Ser-94 each carry phosphoserine. The stretch at 94-128 (SEEEKSHRRLKRKRKKEREKEKRRSKKRRKSKHKR) forms a coiled coil. Basic residues predominate over residues 100 to 130 (HRRLKRKRKKEREKEKRRSKKRRKSKHKRHA). Positions 135–144 (DFSDFSDDSD) are enriched in acidic residues. Residue Tyr-155 is modified to Phosphotyrosine. Residues 165-174 (SHQQYSSSHN) are compositionally biased toward polar residues. Positions 194–218 (EDYENEQYGEYEGDEEEDMGKEDYD) are enriched in acidic residues. Basic and acidic residues predominate over residues 219–235 (DFTKELNQYRRAKEGSS). Residues 238 to 251 (RGSRGRGRGYRGRG) are compositionally biased toward basic residues. The segment covering 252 to 264 (SRGGSRGRGMGRG) has biased composition (gly residues). Over residues 277–303 (PEDEEDLYEEEIEYGESEEPMGDDDYD) the composition is skewed to acidic residues. Residues 304-320 (DYSKELNQYRRSKDSRG) show a composition bias toward basic and acidic residues. Positions 322 to 346 (GLSRGRGRGSRGGRGKGMGRGRGRG) are enriched in basic residues. Acidic residues predominate over residues 357–368 (NDDEDFYDDDMG). Residues 376–387 (RRSDHDKPHQQS) show a composition bias toward basic and acidic residues. C3H1-type zinc fingers lie at residues 389–416 (KKGK…HDIE), 418–445 (PKKR…HGDF), and 446–469 (PCKL…HDPL). The segment covering 485–495 (AEAGAEDEKEV) has biased composition (acidic residues). The segment at 485-567 (AEAGAEDEKE…LPTHEPLSPQ (83 aa)) is disordered. Pro residues-rich tracts occupy residues 506–529 (LPKP…PAPT) and 538–556 (GGPP…PPQM). The residue at position 599 (Arg-599) is an Asymmetric dimethylarginine. Disordered regions lie at residues 601–691 (PGPG…DSPH), 719–970 (PGLV…SHIK), and 994–1304 (LPIP…PFCQ). Positions 603-622 (PGGPSGPMGPGPNMGPPGPM) are enriched in pro residues. Residues 628–660 (PDMHPDMHPDMHPDMHPDMHPDMHPDMHPDMHP) are compositionally biased toward basic and acidic residues. Pro residues predominate over residues 669-683 (NPGPPMGPGGPPMMP). The stretch at 778 to 809 (ALYLRIQQKQQEEERARRLAESSKQDRENEEG) forms a coiled coil. A compositionally biased stretch (basic and acidic residues) spans 787–804 (QQEEERARRLAESSKQDR). Residues Ser-816 and Ser-817 each carry the phosphoserine modification. The span at 824–852 (SSVTSILKTLRQQTSSRPQASVGEPSSSG) shows a compositional bias: polar residues. Residues 869-884 (SDPRLSRDPRLSRHAE) show a composition bias toward basic and acidic residues. 3 positions are modified to phosphoserine: Ser-913, Ser-916, and Ser-917. Low complexity predominate over residues 913 to 929 (SLHSSPAGPSSSKGQPP). Pro residues predominate over residues 994-1005 (LPIPKQDVPPVP). Polar residues-rich tracts occupy residues 1028–1044 (NTRQ…SGSN) and 1058–1067 (VNVNTPGQSE). Basic and acidic residues predominate over residues 1068-1085 (KPSDPRVRKTPTDPRLQK). Composition is skewed to low complexity over residues 1098-1129 (PCPT…VLAA) and 1137-1146 (SSGQSSVLSG). Phosphoserine occurs at positions 1104, 1109, 1111, and 1115. Thr-1119 bears the Phosphothreonine mark. Over residues 1204 to 1220 (KASTDGATATDRYNSYN) the composition is skewed to polar residues. Residues 1225–1235 (KATAAPTAASS) show a composition bias toward low complexity. Residues Ser-1270 and Ser-1276 each carry the phosphoserine modification.

Belongs to the suppressor of sable family. As to quaternary structure, interacts with WDR82.

It localises to the chromosome. Functionally, RNA-binding protein that suppresses transcription of long non-coding RNAs (lncRNAs). LncRNAs are defined as transcripts more than 200 nucleotides that are not translated into protein. Together with WDR82, part of a transcription termination checkpoint that promotes transcription termination of lncRNAs and their subsequent degradation by the exosome. The transcription termination checkpoint is activated by the inefficiently spliced first exon of lncRNAs. This chain is Zinc finger CCCH domain-containing protein 4, found in Mus musculus (Mouse).